We begin with the raw amino-acid sequence, 769 residues long: Disintegrin and metalloproteinase domain-containing protein 11 (769 aa).

The N-terminal stretch at 1–23 is a signal peptide; the sequence is MRLLRRWAFAALLLSLLPTPGLG. Positions 24 to 225 are excised as a propeptide; sequence TQGPAGALRW…PNRPRLRRKR (202 aa). Residues 40–78 are disordered; the sequence is GGPGAPEVTEPSRLVRESSGGEVRKQQLDTRVRQEPPGG. Positions 61 to 73 are enriched in basic and acidic residues; it reads EVRKQQLDTRVRQ. N-linked (GlcNAc...) asparagine glycosylation is found at asparagine 96 and asparagine 163. Topologically, residues 226-734 are extracellular; the sequence is QVRRGHPTVH…ERYKGPSGTN (509 aa). Positions 239–438 constitute a Peptidase M12B domain; sequence KYVELIVIND…GGGSCLFNKP (200 aa). Residues 332 to 769 form a required for localization to cerebellar cortex basket cell terminals. Also required for localization of KCNA1, KCNA2, DLG4 and ADAM22 to cerebellar cortex basket cell terminal perisomatic axons and pinceaux region; it reads GRTFQSTSSG…NIRRGRSGGA (438 aa). Disulfide bonds link cysteine 349-cysteine 433, cysteine 392-cysteine 417, cysteine 394-cysteine 401, and cysteine 503-cysteine 523. The region spanning 444–531 is the Disintegrin domain; that stretch reads PPECGNGFVE…QCPPNLHKLD (88 aa). Asparagine 605 and asparagine 673 each carry an N-linked (GlcNAc...) asparagine glycan. 3 disulfides stabilise this stretch: cysteine 677–cysteine 692, cysteine 686–cysteine 698, and cysteine 700–cysteine 709. One can recognise an EGF-like domain in the interval 677–709; the sequence is CPGSGERRICSHHGVCSNEGKCICQPDWTGKDC. A helical transmembrane segment spans residues 735-755; that stretch reads IIIGSIAGAVLVAAIVLGGTG. Topologically, residues 756–769 are cytoplasmic; the sequence is WGFKNIRRGRSGGA.

As to quaternary structure, interacts with LGI1 and LGI4. Interacts with KCNA1/KV1.1, KCNA2/KV1.2, DLG4/PSD-95 and ADAM22. Post-translationally, the precursor is cleaved by a furin endopeptidase. In terms of tissue distribution, expressed predominantly in brain. Slightly detected or not at all in other tissues.

It localises to the presynaptic cell membrane. Its subcellular location is the perikaryon. It is found in the cell projection. The protein localises to the axon. Its function is as follows. Probable ligand for integrin in the brain. This is a non catalytic metalloprotease-like protein. Required for localization of the potassium channel subunit proteins KCNA1/KV1.1 and KCNA2/KV1.2 at cerebellar cortex basket cell distal terminals, is thereby involved in ephaptic inhibitory synchronization of Purkinje cell firing and response to stress. Plays a role in spatial learning and motor coordination. Involved in the nociceptive pain response to chemical-derived stimulation. This chain is Disintegrin and metalloproteinase domain-containing protein 11 (ADAM11), found in Homo sapiens (Human).